The following is a 56-amino-acid chain: Large ribosomal subunit protein bL32 (56 aa).

It belongs to the bacterial ribosomal protein bL32 family.

The sequence is that of Large ribosomal subunit protein bL32 from Prochlorococcus marinus (strain MIT 9301).